The primary structure comprises 338 residues: Glycerol-3-phosphate dehydrogenase [NAD(P)+] (338 aa).

The NADPH site is built by Trp-20 and Lys-110. Lys-110, Gly-141, and Ser-143 together coordinate sn-glycerol 3-phosphate. Ala-145 contacts NADPH. Sn-glycerol 3-phosphate contacts are provided by Lys-197, Asp-250, Ser-260, Arg-261, and Asn-262. Lys-197 serves as the catalytic Proton acceptor. Residue Arg-261 participates in NADPH binding. NADPH is bound at residue Glu-287.

The protein belongs to the NAD-dependent glycerol-3-phosphate dehydrogenase family.

The protein localises to the cytoplasm. The catalysed reaction is sn-glycerol 3-phosphate + NAD(+) = dihydroxyacetone phosphate + NADH + H(+). The enzyme catalyses sn-glycerol 3-phosphate + NADP(+) = dihydroxyacetone phosphate + NADPH + H(+). Its pathway is membrane lipid metabolism; glycerophospholipid metabolism. Catalyzes the reduction of the glycolytic intermediate dihydroxyacetone phosphate (DHAP) to sn-glycerol 3-phosphate (G3P), the key precursor for phospholipid synthesis. The chain is Glycerol-3-phosphate dehydrogenase [NAD(P)+] from Aster yellows witches'-broom phytoplasma (strain AYWB).